The sequence spans 166 residues: 3-dehydroquinate dehydratase (166 aa).

Y22 (proton acceptor) is an active-site residue. Substrate-binding residues include N73, H79, and D86. H99 functions as the Proton donor in the catalytic mechanism. Substrate contacts are provided by residues 100 to 101 and R110; that span reads IT.

Belongs to the type-II 3-dehydroquinase family. Homododecamer.

The enzyme catalyses 3-dehydroquinate = 3-dehydroshikimate + H2O. It functions in the pathway metabolic intermediate biosynthesis; chorismate biosynthesis; chorismate from D-erythrose 4-phosphate and phosphoenolpyruvate: step 3/7. Functionally, catalyzes a trans-dehydration via an enolate intermediate. In Wolinella succinogenes (strain ATCC 29543 / DSM 1740 / CCUG 13145 / JCM 31913 / LMG 7466 / NCTC 11488 / FDC 602W) (Vibrio succinogenes), this protein is 3-dehydroquinate dehydratase.